We begin with the raw amino-acid sequence, 378 residues long: Protein RecA (378 aa).

ATP is bound at residue 79-86 (GPESSGKT).

It belongs to the RecA family.

The protein localises to the cytoplasm. Functionally, can catalyze the hydrolysis of ATP in the presence of single-stranded DNA, the ATP-dependent uptake of single-stranded DNA by duplex DNA, and the ATP-dependent hybridization of homologous single-stranded DNAs. It interacts with LexA causing its activation and leading to its autocatalytic cleavage. The chain is Protein RecA from Streptococcus pyogenes serotype M28 (strain MGAS6180).